The chain runs to 202 residues: Peptidyl-tRNA hydrolase (202 aa).

Residue Tyr-22 coordinates tRNA. The active-site Proton acceptor is His-27. 3 residues coordinate tRNA: Phe-69, Asn-71, and Asn-117.

The protein belongs to the PTH family. As to quaternary structure, monomer.

The protein localises to the cytoplasm. The catalysed reaction is an N-acyl-L-alpha-aminoacyl-tRNA + H2O = an N-acyl-L-amino acid + a tRNA + H(+). Hydrolyzes ribosome-free peptidyl-tRNAs (with 1 or more amino acids incorporated), which drop off the ribosome during protein synthesis, or as a result of ribosome stalling. Its function is as follows. Catalyzes the release of premature peptidyl moieties from peptidyl-tRNA molecules trapped in stalled 50S ribosomal subunits, and thus maintains levels of free tRNAs and 50S ribosomes. This is Peptidyl-tRNA hydrolase from Thiobacillus denitrificans (strain ATCC 25259 / T1).